The chain runs to 436 residues: 3-ketoacyl-CoA thiolase (436 aa).

Cysteine 99 functions as the Acyl-thioester intermediate in the catalytic mechanism. Residues histidine 392 and cysteine 422 each act as proton acceptor in the active site.

Belongs to the thiolase-like superfamily. Thiolase family. As to quaternary structure, heterotetramer of two alpha chains (FadJ) and two beta chains (FadI).

The protein localises to the cytoplasm. It carries out the reaction an acyl-CoA + acetyl-CoA = a 3-oxoacyl-CoA + CoA. The protein operates within lipid metabolism; fatty acid beta-oxidation. Its function is as follows. Catalyzes the final step of fatty acid oxidation in which acetyl-CoA is released and the CoA ester of a fatty acid two carbons shorter is formed. This is 3-ketoacyl-CoA thiolase from Salmonella typhimurium (strain LT2 / SGSC1412 / ATCC 700720).